Here is a 210-residue protein sequence, read N- to C-terminus: Endonuclease III (210 aa).

The HhH domain occupies 108-127; that stretch reads FKALIKLPGVGRKTANVVLN. Cysteine 187, cysteine 194, cysteine 197, and cysteine 203 together coordinate [4Fe-4S] cluster.

Belongs to the Nth/MutY family. [4Fe-4S] cluster serves as cofactor.

It carries out the reaction 2'-deoxyribonucleotide-(2'-deoxyribose 5'-phosphate)-2'-deoxyribonucleotide-DNA = a 3'-end 2'-deoxyribonucleotide-(2,3-dehydro-2,3-deoxyribose 5'-phosphate)-DNA + a 5'-end 5'-phospho-2'-deoxyribonucleoside-DNA + H(+). Its function is as follows. DNA repair enzyme that has both DNA N-glycosylase activity and AP-lyase activity. The DNA N-glycosylase activity releases various damaged pyrimidines from DNA by cleaving the N-glycosidic bond, leaving an AP (apurinic/apyrimidinic) site. The AP-lyase activity cleaves the phosphodiester bond 3' to the AP site by a beta-elimination, leaving a 3'-terminal unsaturated sugar and a product with a terminal 5'-phosphate. This Rickettsia conorii (strain ATCC VR-613 / Malish 7) protein is Endonuclease III.